The following is a 462-amino-acid chain: Glutamate--tRNA ligase (462 aa).

The short motif at 11-21 (PSPTGFIHLGN) is the 'HIGH' region element. A 'KMSKS' region motif is present at residues 243-247 (KMSKR). Lysine 246 contributes to the ATP binding site.

It belongs to the class-I aminoacyl-tRNA synthetase family. Glutamate--tRNA ligase type 1 subfamily. As to quaternary structure, monomer.

Its subcellular location is the cytoplasm. The catalysed reaction is tRNA(Glu) + L-glutamate + ATP = L-glutamyl-tRNA(Glu) + AMP + diphosphate. Its function is as follows. Catalyzes the attachment of glutamate to tRNA(Glu) in a two-step reaction: glutamate is first activated by ATP to form Glu-AMP and then transferred to the acceptor end of tRNA(Glu). The chain is Glutamate--tRNA ligase from Albidiferax ferrireducens (strain ATCC BAA-621 / DSM 15236 / T118) (Rhodoferax ferrireducens).